The chain runs to 167 residues: uncharacterized protein (167 aa).

This sequence belongs to the A.longa ORF167/ORF288 family.

The protein localises to the plastid. This is an uncharacterized protein from Euglena longa (Euglenophycean alga).